A 353-amino-acid polypeptide reads, in one-letter code: Photosystem II D2 protein (353 aa).

Threonine 2 carries the post-translational modification N-acetylthreonine. Residue threonine 2 is modified to Phosphothreonine. The helical transmembrane segment at 41 to 61 threads the bilayer; it reads CAYFAVGGWFTGTTFVTSWYT. Histidine 118 serves as a coordination point for chlorophyll a. Residues 125–141 traverse the membrane as a helical segment; it reads GFMLRQFELARSVQLRP. Pheophytin a is bound by residues glutamine 130 and asparagine 143. A helical transmembrane segment spans residues 153 to 166; the sequence is VFVSVFLIYPLGQS. A chlorophyll a-binding site is contributed by histidine 198. Residues 208 to 228 form a helical membrane-spanning segment; the sequence is AALLCAIHGATVENTLFEDGD. 2 residues coordinate a plastoquinone: histidine 215 and phenylalanine 262. Position 215 (histidine 215) interacts with Fe cation. A Fe cation-binding site is contributed by histidine 269. A helical membrane pass occupies residues 279–295; it reads GLWMSALGVVGLALNLR.

It belongs to the reaction center PufL/M/PsbA/D family. As to quaternary structure, PSII is composed of 1 copy each of membrane proteins PsbA, PsbB, PsbC, PsbD, PsbE, PsbF, PsbH, PsbI, PsbJ, PsbK, PsbL, PsbM, PsbT, PsbX, PsbY, PsbZ, Psb30/Ycf12, at least 3 peripheral proteins of the oxygen-evolving complex and a large number of cofactors. It forms dimeric complexes. The D1/D2 heterodimer binds P680, chlorophylls that are the primary electron donor of PSII, and subsequent electron acceptors. It shares a non-heme iron and each subunit binds pheophytin, quinone, additional chlorophylls, carotenoids and lipids. There is also a Cl(-1) ion associated with D1 and D2, which is required for oxygen evolution. The PSII complex binds additional chlorophylls, carotenoids and specific lipids. serves as cofactor.

It is found in the plastid. The protein localises to the chloroplast thylakoid membrane. It catalyses the reaction 2 a plastoquinone + 4 hnu + 2 H2O = 2 a plastoquinol + O2. Photosystem II (PSII) is a light-driven water:plastoquinone oxidoreductase that uses light energy to abstract electrons from H(2)O, generating O(2) and a proton gradient subsequently used for ATP formation. It consists of a core antenna complex that captures photons, and an electron transfer chain that converts photonic excitation into a charge separation. The D1/D2 (PsbA/PsbD) reaction center heterodimer binds P680, the primary electron donor of PSII as well as several subsequent electron acceptors. D2 is needed for assembly of a stable PSII complex. This chain is Photosystem II D2 protein, found in Atropa belladonna (Belladonna).